A 396-amino-acid chain; its full sequence is Potassium channel subfamily K member 9 (396 aa).

Residues 1–8 (MKRQNVRT) lie on the Cytoplasmic side of the membrane. Residues 9 to 29 (LSLIACTFTYLLVGAAVFDAL) traverse the membrane as a helical segment. The Extracellular segment spans residues 30–88 (ESDHEMREEEKLKAEEVRLRGKYNISSDDYQQLELVILQSEPHRAGVQWKFAGSFYFAI). Asn-53 carries N-linked (GlcNAc...) asparagine glycosylation. Residues 89–101 (TVITTIGYGHAAP) constitute an intramembrane region (pore-forming). Thr-93, Ile-94, Gly-95, and Tyr-96 together coordinate K(+). The selectivity filter 1 stretch occupies residues 93–98 (TIGYGH). At 102-107 (GTDAGK) the chain is on the extracellular side. Residues 108–128 (AFCMFYAVLGIPLTLVMFQSL) form a helical membrane-spanning segment. Topologically, residues 129–158 (GERMNTFVRYLLKRIKKCCGMRNTEVSMEN) are cytoplasmic. The helical transmembrane segment at 159–179 (MVTVGFFSCMGTLCLGAAAFS) threads the bilayer. Residues 180–194 (QCEDWSFFHAYYYCF) are Extracellular-facing. The segment at residues 195–207 (ITLTTIGFGDFVA) is an intramembrane region (pore-forming). Residues Thr-199, Ile-200, Gly-201, and Phe-202 each contribute to the K(+) site. The interval 199-204 (TIGFGD) is selectivity filter 2. Residues 208–218 (LQSKGALQRKP) lie on the Extracellular side of the membrane. A helical membrane pass occupies residues 219-239 (FYVAFSFMYILVGLTVIGAFL). Residues 240 to 396 (NLVVLRFLTM…HRLHIRRKSI (157 aa)) are Cytoplasmic-facing. The tract at residues 243 to 248 (VLRFLT) is X-gate.

It belongs to the two pore domain potassium channel (TC 1.A.1.8) family. In terms of assembly, homodimer. Heterodimer with KCNK1. Heterodimer with KCNK3. Highly expressed in the CNS and at lower levels in the colon, kidney, liver, lung, spleen, stomach and skeletal muscle. The highest expression was found in the olfactory nuclei, piriform cortex, cerebellum, antedorsal thalmic nucleus, pontine nucleus, dorsal raphe and several nuclei in the medulla. Shows a non-homogeneous distribution in the hippocampus. Expressed at highest levels in the lateral posterior and inferior portions and at medium levels in neocortex. Expressed in motoneurons, including hypoglossal motoneurons (at protein level).

It localises to the cell membrane. It is found in the mitochondrion inner membrane. The protein resides in the cell projection. The protein localises to the dendrite. It catalyses the reaction K(+)(in) = K(+)(out). It carries out the reaction Na(+)(in) = Na(+)(out). With respect to regulation, activated by halothane and isoflurane. Inhibited by external acidification, diacylglycerol, anandamide and AGT/angiotensin II. Ruthenium red inhibits homomeric but not KCNK3:KCNK9 heteromeric channels. Its function is as follows. K(+) channel that conducts voltage-dependent outward rectifying currents upon membrane depolarization. Voltage sensing is coupled to K(+) electrochemical gradient in an 'ion flux gating' mode where outward but not inward ion flow opens the gate. Changes ion selectivity and becomes permeable to Na(+) ions in response to extracellular acidification. Protonation of the pH sensor His-98 stabilizes C-type inactivation conformation likely converting the channel from outward K(+)-conducting, to inward Na(+)-conducting to nonconductive state. Homo- and heterodimerizes to form functional channels with distinct regulatory and gating properties. Allows K(+) currents with fast-gating kinetics important for the repolarization and hyperpolarization phases of action potentials. In granule neurons, hyperpolarizes the resting membrane potential to limit intrinsic neuronal excitability, but once the action potential threshold is reached, supports high-frequency action potential firing and increased neuronal excitability. Homomeric and/or heteromeric KCNK3:KCNK9 channels operate in cerebellar granule cells, whereas heteromeric KCNK1:KCNK9 enables currents in hippocampal dentate gyrus granule neurons. Dispensable for central chemosensory respiration i.e. breathing controlled by brainstem CO2/pH, it rather conducts pH-sensitive currents and controls the firing rate of serotonergic raphe neurons involved in potentiation of the respiratory chemoreflex. In retinal ganglion cells, mediates outward rectifying currents that regulate action potentials in response to acidification of the synaptic cleft. Involved in transmission of image-forming and nonimage-forming visual information in the retina. In adrenal gland, contributes to the maintenance of a hyperpolarized resting membrane potential of aldosterone-producing cells at zona glomerulosa and limits aldosterone release as part of a regulatory mechanism that controls arterial blood pressure and electrolyte homeostasis. The polypeptide is Potassium channel subfamily K member 9 (Rattus norvegicus (Rat)).